Reading from the N-terminus, the 462-residue chain is Putative ABC transporter A445L (462 aa).

Belongs to the protein kinase superfamily. ADCK protein kinase family.

This is Putative ABC transporter A445L from Chlorella (PBCV-1).